The chain runs to 182 residues: Constitutive photomorphogenesis protein 10 (182 aa).

The UBC core domain occupies 36-182 (ASGKRIQREM…AKEWTLRFAK (147 aa)).

This sequence belongs to the ubiquitin-conjugating enzyme family. Component of the CDD complex, at least composed of COP10, DET1 and DDB1A. Interacts with E3 ubiquitin ligase COP1. Interacts with E2 ubiquitin conjugating UBC5. Interacts with CSN3, CSN4 and CSN8 subunits of the COP9 complex. As to expression, expressed in flower, leaf, stem and seedling. Expressed at lower level in root.

The protein localises to the nucleus. In terms of biological role, component of light signal transduction machinery. Involved in repression of photomorphogenesis in darkness by participating in the CDD complex, a complex probably required to regulate the activity of ubiquitin conjugating enzymes (E2s). Repression of photomorphogenesis is probably mediated by ubiquitination and subsequent degradation of photomorphogenesis-promoting factors such as HY5, HYH and LAF1. Although strongly related to ubiquitin-conjugating enzyme, it has no catalytic activity by itself due to the absence of the conserved Cys active site at position 120. It can however enhance the activity of E2 conjugating enzymes. The polypeptide is Constitutive photomorphogenesis protein 10 (COP10) (Arabidopsis thaliana (Mouse-ear cress)).